A 310-amino-acid polypeptide reads, in one-letter code: Glutamyl-Q tRNA(Asp) synthetase (310 aa).

L-glutamate is bound by residues 24 to 28 (RFAPS) and glutamate 60. The 'HIGH' region signature appears at 27–37 (PSPSGPLHFGS). Zn(2+) contacts are provided by cysteine 116, cysteine 118, tyrosine 130, and cysteine 134. L-glutamate contacts are provided by tyrosine 187 and arginine 205. The 'KMSKS' region signature appears at 243-247 (KLSKQ). Position 246 (lysine 246) interacts with ATP.

Belongs to the class-I aminoacyl-tRNA synthetase family. GluQ subfamily. It depends on Zn(2+) as a cofactor.

Its function is as follows. Catalyzes the tRNA-independent activation of glutamate in presence of ATP and the subsequent transfer of glutamate onto a tRNA(Asp). Glutamate is transferred on the 2-amino-5-(4,5-dihydroxy-2-cyclopenten-1-yl) moiety of the queuosine in the wobble position of the QUC anticodon. This is Glutamyl-Q tRNA(Asp) synthetase from Photobacterium profundum (strain SS9).